Consider the following 182-residue polypeptide: Peptidyl-prolyl cis-trans isomerase H (182 aa).

The PPIase cyclophilin-type domain occupies 15–181; it reads FFDITLGGEP…LDVVIAQCGE (167 aa).

Belongs to the cyclophilin-type PPIase family. PPIase H subfamily.

Its subcellular location is the nucleus. The enzyme catalyses [protein]-peptidylproline (omega=180) = [protein]-peptidylproline (omega=0). In terms of biological role, PPIases accelerate the folding of proteins. It catalyzes the cis-trans isomerization of proline imidic peptide bonds in oligopeptides. The polypeptide is Peptidyl-prolyl cis-trans isomerase H (cyp-3) (Neurospora crassa (strain ATCC 24698 / 74-OR23-1A / CBS 708.71 / DSM 1257 / FGSC 987)).